A 487-amino-acid polypeptide reads, in one-letter code: Protein NEN2 (487 aa).

Positions 18 to 179 constitute an Exonuclease domain; sequence FFDVETTIPF…LDDVRMNFEV (162 aa). Mg(2+) contacts are provided by D20 and E22. H167 (proton donor/acceptor) is an active-site residue. A Mg(2+)-binding site is contributed by D172. Disordered stretches follow at residues 200-233 and 269-291; these read NSVT…TGEN and SDVP…GTGD. Residues 221 to 233 show a composition bias toward polar residues; that stretch reads PLQSPTDQQTGEN.

Mg(2+) serves as cofactor. In terms of tissue distribution, expressed in the sieve elements and phloem pole pericycle cells.

It is found in the cytoplasm. The protein resides in the nucleus. Probable exonuclease involved in enuclation of sieve elements. The polypeptide is Protein NEN2 (Arabidopsis thaliana (Mouse-ear cress)).